Consider the following 630-residue polypeptide: Cyclin-T1-2 (630 aa).

Low complexity predominate over residues 288–297; it reads QSSLSVSSSS. Disordered regions lie at residues 288 to 313 and 410 to 439; these read QSSL…DSSQ and RSGD…VEPP. A compositionally biased stretch (polar residues) spans 421–439; that stretch reads GGSSLTDVDSKSTQSVEPP.

Belongs to the cyclin family. Cyclin T subfamily.

The protein is Cyclin-T1-2 (CYCT1_2) of Oryza sativa subsp. japonica (Rice).